The chain runs to 293 residues: 4-diphosphocytidyl-2-C-methyl-D-erythritol kinase (293 aa).

Lysine 16 is a catalytic residue. 99–109 (PMGAGLGGGSS) lines the ATP pocket. Aspartate 141 is a catalytic residue.

This sequence belongs to the GHMP kinase family. IspE subfamily.

The catalysed reaction is 4-CDP-2-C-methyl-D-erythritol + ATP = 4-CDP-2-C-methyl-D-erythritol 2-phosphate + ADP + H(+). It functions in the pathway isoprenoid biosynthesis; isopentenyl diphosphate biosynthesis via DXP pathway; isopentenyl diphosphate from 1-deoxy-D-xylulose 5-phosphate: step 3/6. Catalyzes the phosphorylation of the position 2 hydroxy group of 4-diphosphocytidyl-2C-methyl-D-erythritol. The chain is 4-diphosphocytidyl-2-C-methyl-D-erythritol kinase from Burkholderia cenocepacia (strain HI2424).